Consider the following 704-residue polypeptide: ATP-dependent zinc metalloprotease FTSH 5, chloroplastic (704 aa).

Residues 1-58 (MATTSSNPLLLSSNFLGSQIIISAPTPKTTTKSLPFSVISRKRYQISQSEKLMKSLPS) constitute a chloroplast transit peptide. A thylakoid-targeting transit peptide spans 59 to 76 (QAALAALLFSSSSPQALA). A helical membrane pass occupies residues 193-213 (FDFIGNLLFPLLAFGGLFYLF). Residue 290–297 (GPPGTGKT) participates in ATP binding. His-512 is a binding site for Zn(2+). The active site involves Glu-513. 2 residues coordinate Zn(2+): His-516 and Asp-593.

It in the N-terminal section; belongs to the AAA ATPase family. In the C-terminal section; belongs to the peptidase M41 family. Heterohexamers with FTSH1, FTSH2 and FTSH8. Zn(2+) serves as cofactor. Ubiquitous.

It localises to the plastid. Its subcellular location is the chloroplast thylakoid membrane. Part of a complex that function as an ATP-dependent zinc metallopeptidase. Involved in the thylakoid formation and in the removal of damaged D1 in the photosystem II, preventing cell death under high-intensity light conditions. Not involved in the degradation of the light-harvesting complex of photosystem II (LHC II) or in thermotolerance. This Arabidopsis thaliana (Mouse-ear cress) protein is ATP-dependent zinc metalloprotease FTSH 5, chloroplastic (FTSH5).